The sequence spans 404 residues: Indole-3-acetate O-methyltransferase 1 (404 aa).

S-adenosyl-L-methionine contacts are provided by residues 82-83 (GC), Asn88, Asp120, 169-171 (TFY), and 186-188 (TFS). Residues Asn208, Val212, Arg294, Asp295, Phe297, and Asn298 each contribute to the Mg(2+) site.

Belongs to the methyltransferase superfamily. SABATH family. In terms of assembly, homodimer. The cofactor is Mg(2+). As to expression, expressed in roots and panicles.

The enzyme catalyses (indol-3-yl)acetate + S-adenosyl-L-methionine = methyl (indol-3-yl)acetate + S-adenosyl-L-homocysteine. In terms of biological role, catalyzes the methylation of the free carboxyl end of the plant hormone indole-3-acetic acid (IAA). Converts IAA to IAA methyl ester (MeIAA). Regulates IAA activities by IAA methylation. Methylation of IAA plays an important role in regulating plant development and auxin homeostasis. MeIAA seems to be an inactive form of IAA. The protein is Indole-3-acetate O-methyltransferase 1 (IAMT1) of Oryza sativa subsp. japonica (Rice).